The sequence spans 678 residues: NADPH--cytochrome P450 reductase (678 aa).

N-acetylglycine is present on Gly-2. Topologically, residues 2–21 (GDSHVDTGATSTEAVAEEVS) are lumenal. A helical transmembrane segment spans residues 22-42 (LFSMTDMILLSVLVGFLTYFF). Topologically, residues 43-678 (LFRKKKEEIP…KGRYSLDVWS (636 aa)) are cytoplasmic. Ser-63 carries the phosphoserine modification. The Flavodoxin-like domain occupies 80–224 (IIVFYGSQTG…DFITWREQFW (145 aa)). Residues 86 to 91 (SQTGTA), 138 to 141 (ATYG), 173 to 182 (LGNKTYEHFN), and Asp-208 each bind FMN. The FAD-binding FR-type domain maps to 279–521 (KNPFLAAVTT…FVRKSQFRLP (243 aa)). NADP(+) is bound at residue Arg-298. FAD contacts are provided by residues Arg-424, 454–457 (RYYS), 472–474 (CAV), Tyr-478, and 488–491 (GVAT). NADP(+)-binding positions include Thr-535, 596–597 (SR), 602–606 (KVYVQ), and Asp-639. Trp-677 contacts FAD.

Belongs to the NADPH--cytochrome P450 reductase family. This sequence in the N-terminal section; belongs to the flavodoxin family. It in the C-terminal section; belongs to the flavoprotein pyridine nucleotide cytochrome reductase family. FAD serves as cofactor. FMN is required as a cofactor.

It localises to the endoplasmic reticulum membrane. The enzyme catalyses 2 oxidized [cytochrome P450] + NADPH = 2 reduced [cytochrome P450] + NADP(+) + H(+). In terms of biological role, this enzyme is required for electron transfer from NADP to cytochrome P450 in microsomes. It can also provide electron transfer to heme oxygenase and cytochrome B5. In Cavia porcellus (Guinea pig), this protein is NADPH--cytochrome P450 reductase.